The following is a 371-amino-acid chain: Cytochrome b (371 aa).

4 helical membrane passes run phenylalanine 25–methionine 45, tryptophan 69–isoleucine 90, tryptophan 105–leucine 125, and phenylalanine 170–methionine 190. Heme b is bound by residues histidine 75 and histidine 89. Heme b is bound by residues histidine 174 and histidine 188. Residue histidine 193 participates in a ubiquinone binding. A run of 4 helical transmembrane segments spans residues tyrosine 218–phenylalanine 238, leucine 280–histidine 300, leucine 312–threonine 332, and phenylalanine 339–proline 358.

It belongs to the cytochrome b family. As to quaternary structure, the cytochrome bc1 complex contains 3 respiratory subunits (MT-CYB, CYC1 and UQCRFS1), 2 core proteins (UQCRC1 and UQCRC2) and probably 6 low-molecular weight proteins. Heme b serves as cofactor.

It localises to the mitochondrion inner membrane. In terms of biological role, component of the ubiquinol-cytochrome c reductase complex (complex III or cytochrome b-c1 complex) that is part of the mitochondrial respiratory chain. The b-c1 complex mediates electron transfer from ubiquinol to cytochrome c. Contributes to the generation of a proton gradient across the mitochondrial membrane that is then used for ATP synthesis. The sequence is that of Cytochrome b (MT-CYB) from Candoia carinata (Papuan tree boa).